A 311-amino-acid chain; its full sequence is MQRLDPWHGRCDLQFHATNGSTKHQGGCTAPFKLLRSERGEDGRCELPVLHTAGGLVGGDQLSLDFKLEANSRGLITSVAAQKVYGSIGRSRLQPEGCFAHQQVRCSLASGSDLEWLPQELVLYADALFEQQLTVTLPQDASFLSAEIVRLGRTAAGETLQQGRWRSSLTIQRLAGESSTWELADRVELGGASLESPHGLGGAPVFGTLVWAAPMAMGAETTASVLEGARADREGLTGTMRCGALNQGLIARYSGESSRDARFWFSRIWERTRTIRGLTRPRIPRVWPLQEQPLRRQTSTVNAFEAAAETH.

Belongs to the UreD family. As to quaternary structure, ureD, UreF and UreG form a complex that acts as a GTP-hydrolysis-dependent molecular chaperone, activating the urease apoprotein by helping to assemble the nickel containing metallocenter of UreC. The UreE protein probably delivers the nickel.

Its subcellular location is the cytoplasm. Required for maturation of urease via the functional incorporation of the urease nickel metallocenter. The sequence is that of Urease accessory protein UreD from Synechococcus sp. (strain CC9605).